Consider the following 151-residue polypeptide: UPF0208 membrane protein Spro_3315 (151 aa).

2 helical membrane-spanning segments follow: residues 46-64 (FAVR…WQIA) and 70-90 (GPAI…LWWL).

The protein belongs to the UPF0208 family.

The protein localises to the cell inner membrane. In Serratia proteamaculans (strain 568), this protein is UPF0208 membrane protein Spro_3315.